A 364-amino-acid chain; its full sequence is DNA replication and repair protein RecF (364 aa).

30–37 contacts ATP; that stretch reads GNNGMGKT.

It belongs to the RecF family.

Its subcellular location is the cytoplasm. Its function is as follows. The RecF protein is involved in DNA metabolism; it is required for DNA replication and normal SOS inducibility. RecF binds preferentially to single-stranded, linear DNA. It also seems to bind ATP. This chain is DNA replication and repair protein RecF, found in Porphyromonas gingivalis (strain ATCC BAA-308 / W83).